We begin with the raw amino-acid sequence, 1221 residues long: Reverse gyrase subunit B (1221 aa).

An RG N-terminal-type zinc finger spans residues 56–97; that stretch reads NEPVAIFGSSCVLCGGDCSSVRLTSRIGICERCLPVDTETLR. Zn(2+) contacts are provided by cysteine 66, cysteine 69, cysteine 85, and cysteine 88. Residues glutamine 161 and 178-185 contribute to the ATP site; that span reads APTGTGKT. In terms of domain architecture, Helicase ATP-binding spans 165–400; sequence TRRLVKGCSF…AVVRELFDFE (236 aa). The short motif at 284–287 is the DEAD box element; sequence DDVD. The Helicase C-terminal domain maps to 424-600; sequence AVERIVRKAG…PLSLNTLMKL (177 aa). The Toprim domain occupies 779–935; the sequence is SALMIVESPN…QVYRTEFHEV (157 aa). Glutamate 785 lines the Mg(2+) pocket. The segment at 856–882 adopts an RG C-terminal-type zinc-finger fold; the sequence is LGRCSECGEQVVGSEECPNCGGEVELK. Residues cysteine 859, cysteine 862, cysteine 872, and cysteine 875 each coordinate Zn(2+). Mg(2+) is bound at residue aspartate 904. In terms of domain architecture, Topo IA-type catalytic spans 953-1221; sequence DAGRVSAQIL…MLHLAGVSGR (269 aa).

This sequence in the C-terminal section; belongs to the type IA topoisomerase family. It in the N-terminal section; belongs to the DEAD box helicase family. DDVD subfamily. As to quaternary structure, heterodimer of an RgyrA and RgyrB subunit. The topoisomerase domain is shared between the two subunits. It depends on Zn(2+) as a cofactor. The cofactor is Mg(2+). In terms of processing, the N-terminus is partially blocked.

Its subcellular location is the cytoplasm. The enzyme catalyses ATP + H2O = ADP + phosphate + H(+). Its function is as follows. Modifies the topological state of DNA by introducing positive supercoils in an ATP-dependent process; dATP also allows positive supercoiling. Increases the linking number in steps of +1. Only this subunit binds ATP, it does so in a DNA- and RgyA-independent manner. Hydrolyzes ATP only in the presence of DNA. The RgyA subunit transiently cleaves a single DNA strand and remains covalently bound to the 5' DNA end probably through a tyrosine residue. It changes linking number in steps of one, and nicks DNA preferentially at 5'-CNNN | 3'-sites with a strong preference for 4 pyrimidine residues. There are about 1000 heterodimers per cell. May be involved in rewinding the DNA strands in the regions of the chromosome that have opened up to allow transcription or replication. Functionally, this subunit expressed in E.coli only has DNA-dependent ATPase activity at 80 degrees Celsius. Reverse gyrase activity is reconstituted after incubation at 80 degrees Celsius for 5 minutes, positive supercoiling requires ATP and Mg(2+). In the presence of ATP it binds and nicks substrate but does not make closed product. The polypeptide is Reverse gyrase subunit B (Methanopyrus kandleri (strain AV19 / DSM 6324 / JCM 9639 / NBRC 100938)).